The following is a 449-amino-acid chain: Metacaspase-1 (449 aa).

A disordered region spans residues 1–132 (MFPGQGRHTY…YSRPPTNQQS (132 aa)). The segment covering 10–26 (YGGQQQLLQLQQYNYGP) has biased composition (low complexity). Over residues 27-55 (PQGPPPNGYGPPPGPPPNGYGPPPGPPPQ) the composition is skewed to pro residues. Residues 56 to 66 (NSWGYGNPSGT) are compositionally biased toward polar residues. 2 stretches are compositionally biased toward low complexity: residues 67-91 (QSSNQQRYQGQQSGQQNYNGGYQRP) and 98-112 (QSGNQRGQPGQNGEP). Polar residues predominate over residues 119-132 (GSGQYSRPPTNQQS). Catalysis depends on residues His-232 and Cys-293.

This sequence belongs to the peptidase C14B family.

Functionally, involved in cell death (apoptosis). The sequence is that of Metacaspase-1 (MCA1) from Lodderomyces elongisporus (strain ATCC 11503 / CBS 2605 / JCM 1781 / NBRC 1676 / NRRL YB-4239) (Yeast).